The sequence spans 238 residues: Protein MIS12 homolog (238 aa).

Residues Glu117–Ser149 adopt a coiled-coil conformation.

This sequence belongs to the mis12 family.

The protein resides in the chromosome. Its subcellular location is the centromere. It localises to the kinetochore. In terms of biological role, constitutive component of kinetochores that is essential for proper cell division during mitotic cell cycle. May play a role in the modulation of centromere during meiosis. In Arabidopsis thaliana (Mouse-ear cress), this protein is Protein MIS12 homolog.